The following is an 81-amino-acid chain: Dermaseptin-B2 (81 aa).

An N-terminal signal peptide occupies residues 1–22 (MAFLKKSLFLVLFLGLVSLSIC). Positions 23 to 43 (EEEKRENEDEEEQEDDEQSEM) are excised as a propeptide. The segment at 24-46 (EEKRENEDEEEQEDDEQSEMKRG) is disordered. Over residues 30-40 (EDEEEQEDDEQ) the composition is skewed to acidic residues. A hinge region that separates the two alpha-helices that constitute the peptide region spans residues 54-55 (VG). Position 78 is a valine amide (Val-78). Residues 80–81 (EQ) constitute a propeptide that is removed on maturation.

In terms of processing, amidation permits an increased antimicrobial activity against some microorganisms such as T.album and S.cerevisiae. Post-translationally, may contain a D-amino acid residue, since the natural peptide is not identical in chromatographic properties to the synthetic peptide. As to expression, expressed by the skin glands.

The protein resides in the secreted. The protein localises to the target cell membrane. In terms of biological role, cationic amphipathic alpha-helical antimicrobial peptide with potent activity against Gram-negative and Gram-positive bacteria, fungi and protozoa. Acts in a synergistic effect in combination with Plasticin-B1 at doses that are not active alone. Acts by disturbing membrane functions. On model membranes, induces a strong perturbation of anionic lipid bilayers, resides at the hydrocarbon core-water interface, parallel to the plane of the membrane, and interacts preferentially with the polar head groups and glycerol backbone region of the anionic phospholipids, as well as the region of the lipid acyl chain near the bilayer surface. Induces a positive curvature of the bilayer and clustering of anionic lipids, consistent with a carpet mechanism, that may lead to the formation of mixed peptide-phospholipid toroidal, transient pores and membrane permeation/disruption once a threshold peptide accumulation is reached. Also enhances binding of agonists to adenosine A1 receptors (ADORA1), adenosine A2a receptors (ADORA2A), alpha-2 adrenergic receptors (ADRA2A) and 5-hydroxytryptamine 1A receptors (HTR1A). In addition, it enhances guanyl nucleotide exchange which may result in the conversion of receptors to a high affinity state complexed with guanyl nucleotide free G-protein. Affects human behavior eliciting profound malaise, followed by listlessness and then euphoria. Does not show cytotoxic activity on CHO cells. Does not act as a chemoattractant. Does not show hemolytic activity. The protein is Dermaseptin-B2 (ADR) of Phyllomedusa bicolor (Two-colored leaf frog).